Reading from the N-terminus, the 189-residue chain is GMP synthase [glutamine-hydrolyzing] subunit A (189 aa).

In terms of domain architecture, Glutamine amidotransferase type-1 spans 1–189 (MIVILNNGGQ…CKKCGFEFEE (189 aa)). The Nucleophile role is filled by Cys76. Active-site residues include His163 and Glu165.

As to quaternary structure, heterodimer composed of a glutamine amidotransferase subunit (A) and a GMP-binding subunit (B).

It carries out the reaction XMP + L-glutamine + ATP + H2O = GMP + L-glutamate + AMP + diphosphate + 2 H(+). Its pathway is purine metabolism; GMP biosynthesis; GMP from XMP (L-Gln route): step 1/1. Its function is as follows. Catalyzes the synthesis of GMP from XMP. This is GMP synthase [glutamine-hydrolyzing] subunit A from Methanococcus maripaludis (strain C6 / ATCC BAA-1332).